The sequence spans 91 residues: Acylphosphatase (91 aa).

The region spanning 3-91 (KLRMNVQGRV…EETEQFKVIQ (89 aa)) is the Acylphosphatase-like domain. Active-site residues include Arg-18 and Asn-36.

This sequence belongs to the acylphosphatase family.

The enzyme catalyses an acyl phosphate + H2O = a carboxylate + phosphate + H(+). This is Acylphosphatase (acyP) from Enterococcus faecalis (strain ATCC 700802 / V583).